The sequence spans 398 residues: Acetate kinase (398 aa).

Residue Asn10 coordinates Mg(2+). Lys17 contacts ATP. Residue Arg91 participates in substrate binding. Asp148 serves as the catalytic Proton donor/acceptor. ATP-binding positions include 208–212 (HLGNG), 283–285 (DCR), and 331–335 (GIGEN). Glu385 is a Mg(2+) binding site.

The protein belongs to the acetokinase family. Homodimer. The cofactor is Mg(2+). Requires Mn(2+) as cofactor.

Its subcellular location is the cytoplasm. The enzyme catalyses acetate + ATP = acetyl phosphate + ADP. It participates in metabolic intermediate biosynthesis; acetyl-CoA biosynthesis; acetyl-CoA from acetate: step 1/2. Catalyzes the formation of acetyl phosphate from acetate and ATP. Can also catalyze the reverse reaction. In Shewanella woodyi (strain ATCC 51908 / MS32), this protein is Acetate kinase.